The sequence spans 685 residues: Polyphosphate kinase (685 aa).

Asn45 serves as a coordination point for ATP. Mg(2+) contacts are provided by Arg375 and Arg405. His435 (phosphohistidine intermediate) is an active-site residue. ATP is bound by residues Tyr468, Arg564, and His592.

Belongs to the polyphosphate kinase 1 (PPK1) family. The cofactor is Mg(2+). In terms of processing, an intermediate of this reaction is the autophosphorylated ppk in which a phosphate is covalently linked to a histidine residue through a N-P bond.

It carries out the reaction [phosphate](n) + ATP = [phosphate](n+1) + ADP. Its function is as follows. Catalyzes the reversible transfer of the terminal phosphate of ATP to form a long-chain polyphosphate (polyP). The sequence is that of Polyphosphate kinase from Neisseria meningitidis serogroup C (strain 053442).